The sequence spans 620 residues: Chaperone protein HscA homolog (620 aa).

It belongs to the heat shock protein 70 family.

Functionally, chaperone involved in the maturation of iron-sulfur cluster-containing proteins. Has a low intrinsic ATPase activity which is markedly stimulated by HscB. The chain is Chaperone protein HscA homolog from Pseudomonas fluorescens (strain ATCC BAA-477 / NRRL B-23932 / Pf-5).